We begin with the raw amino-acid sequence, 189 residues long: Glucose-6-phosphate isomerase (189 aa).

Residues H88, H90, E97, and H136 each contribute to the Fe cation site.

Belongs to the archaeal-type GPI family. In terms of assembly, homodimer. Requires Fe cation as cofactor.

It localises to the cytoplasm. The catalysed reaction is alpha-D-glucose 6-phosphate = beta-D-fructose 6-phosphate. It functions in the pathway carbohydrate degradation; glycolysis; D-glyceraldehyde 3-phosphate and glycerone phosphate from D-glucose: step 2/4. This is Glucose-6-phosphate isomerase (pgiA) from Pyrococcus abyssi (strain GE5 / Orsay).